A 266-amino-acid polypeptide reads, in one-letter code: Movement protein (266 aa).

Positions 212-227 (KTKKGKKRKKEKKKRV) are enriched in basic residues. The disordered stretch occupies residues 212-266 (KTKKGKKRKKEKKKRVVGNSVNNKKINNSGKKGLKVEEIEDNVSDDESIASSSTF). The segment covering 228 to 242 (VGNSVNNKKINNSGK) has biased composition (low complexity). The segment covering 249–259 (EIEDNVSDDES) has biased composition (acidic residues).

The protein belongs to the tobamovirus movement protein family.

The protein localises to the host cytoplasm. It localises to the host cytoskeleton. It is found in the host cell junction. Its subcellular location is the host plasmodesma. Its function is as follows. Transports viral genome to neighboring plant cells directly through plasmosdesmata, without any budding. The movement protein allows efficient cell to cell propagation, by bypassing the host cell wall barrier. Forms a ribonucleoprotein complex with viral RNA. Binds microtubules and modulates microtubule stability. Can bind double-stranded DNA. The protein is Movement protein (MP) of Capsicum annuum (Capsicum pepper).